An 89-amino-acid chain; its full sequence is Pyrin domain-containing protein 1 (89 aa).

The Pyrin domain maps to 1 to 89 (MGTKREAILK…EEAARLQRAA (89 aa)).

As to quaternary structure, interacts with PYCARD/ASC (via pyrin domain). Phosphorylated. Predominantly expressed in monocytes, macrophages and granulocytes.

The protein localises to the cytoplasm. Its function is as follows. Associates with PYCARD/ASC and modulates its ability to collaborate with MEFV/pyrin and NLRP3/cryopyrin in NF-kappa-B and pro-caspase-1 activation. Suppresses kinase activity of NF-kappa-B inhibitor kinase (IKK) complex, expression of NF-kappa-B inducible genes and inhibits NF-kappa-B activation by cytokines and LPS. The polypeptide is Pyrin domain-containing protein 1 (Homo sapiens (Human)).